The following is a 450-amino-acid chain: Phosphoglucosamine mutase (450 aa).

Residue S103 is the Phosphoserine intermediate of the active site. Mg(2+)-binding residues include S103, D243, D245, and D247. S103 carries the phosphoserine modification.

This sequence belongs to the phosphohexose mutase family. Mg(2+) serves as cofactor. Activated by phosphorylation.

It catalyses the reaction alpha-D-glucosamine 1-phosphate = D-glucosamine 6-phosphate. In terms of biological role, catalyzes the conversion of glucosamine-6-phosphate to glucosamine-1-phosphate. This Lactobacillus delbrueckii subsp. bulgaricus (strain ATCC 11842 / DSM 20081 / BCRC 10696 / JCM 1002 / NBRC 13953 / NCIMB 11778 / NCTC 12712 / WDCM 00102 / Lb 14) protein is Phosphoglucosamine mutase.